The following is a 137-amino-acid chain: Small ribosomal subunit protein uS12 (137 aa).

The disordered stretch occupies residues 1-57; that stretch reads MPTINQLVRKPRKSKTKQSDSPVLNRGFNSKKKQFTNLNSPQKRGVCTRVGTMTPRK. The residue at position 102 (aspartate 102) is a 3-methylthioaspartic acid. Positions 118-137 are disordered; it reads SGVDGRRQGRSLYGTKKPKN.

Belongs to the universal ribosomal protein uS12 family. As to quaternary structure, part of the 30S ribosomal subunit. Contacts proteins S8 and S17. May interact with IF1 in the 30S initiation complex.

Functionally, with S4 and S5 plays an important role in translational accuracy. Its function is as follows. Interacts with and stabilizes bases of the 16S rRNA that are involved in tRNA selection in the A site and with the mRNA backbone. Located at the interface of the 30S and 50S subunits, it traverses the body of the 30S subunit contacting proteins on the other side and probably holding the rRNA structure together. The combined cluster of proteins S8, S12 and S17 appears to hold together the shoulder and platform of the 30S subunit. This is Small ribosomal subunit protein uS12 from Staphylococcus epidermidis (strain ATCC 12228 / FDA PCI 1200).